A 168-amino-acid chain; its full sequence is Protein A40 (168 aa).

The Cytoplasmic segment spans residues 1 to 9 (MNKPKTDYA). The helical; Signal-anchor for type II membrane protein transmembrane segment at 10 to 30 (GYACCVICGLIVGIIFTATLL) threads the bilayer. Residues 31 to 168 (KVVERKLVHT…TTFLSYHYFG (138 aa)) are Extracellular-facing. The region spanning 63–168 (YNNKCIHLST…TTFLSYHYFG (106 aa)) is the C-type lectin domain.

This sequence belongs to the poxviridae A40 protein family.

It is found in the host membrane. In Homo sapiens (Human), this protein is Protein A40.